The following is a 330-amino-acid chain: RNA polymerase sigma factor RpoS (330 aa).

The segment at aspartate 56–alanine 89 is sigma-70 factor domain-1. The segment at methionine 94 to threonine 164 is sigma-70 factor domain-2. The Interaction with polymerase core subunit RpoC motif lies at aspartate 118–glutamate 121. Residues glutamate 174–threonine 249 are sigma-70 factor domain-3. The interval tryptophan 262–glutamate 315 is sigma-70 factor domain-4. Positions leucine 288–valine 307 form a DNA-binding region, H-T-H motif.

It belongs to the sigma-70 factor family. RpoS subfamily. Interacts with the RNA polymerase core enzyme and RssB.

The protein resides in the cytoplasm. Functionally, sigma factors are initiation factors that promote the attachment of RNA polymerase to specific initiation sites and are then released. This sigma factor is the master transcriptional regulator of the stationary phase and the general stress response. Controls, positively or negatively, the expression of several hundred genes, which are mainly involved in metabolism, transport, regulation and stress management. Its function is as follows. Protects stationary phase cells from killing induced by endoribonuclease MazF. The polypeptide is RNA polymerase sigma factor RpoS (Escherichia coli (strain K12)).